We begin with the raw amino-acid sequence, 494 residues long: Solute carrier family 2, facilitated glucose transporter member 3 (494 aa).

Residues Met1–Leu10 lie on the Cytoplasmic side of the membrane. A helical transmembrane segment spans residues Ile11–Asn32. At Ala33–Ser64 the chain is on the extracellular side. Asn43 is a glycosylation site (N-linked (GlcNAc...) asparagine). The helical transmembrane segment at Leu65–Val85 threads the bilayer. Over Asn86–Arg90 the chain is Cytoplasmic. A helical membrane pass occupies residues Gly91 to Cys111. At Lys112–Glu118 the chain is on the extracellular side. A helical transmembrane segment spans residues Met119–Ile142. Residues Gly143 to Ala153 are Cytoplasmic-facing. A helical membrane pass occupies residues Phe154 to Leu174. Gln159 contacts D-glucose. Over Lys175 to Leu183 the chain is Extracellular. Residues Trp184 to Phe204 form a helical membrane-spanning segment. Over Cys205 to Pro269 the chain is Cytoplasmic. Thr232 is modified (phosphothreonine). A helical transmembrane segment spans residues Ile270–Tyr290. The interval Gln277–Ser279 is important for selectivity against fructose. Residues Gln280–Gln281 and Asn286 each bind D-glucose. Topologically, residues Tyr291–Pro304 are extracellular. A helical transmembrane segment spans residues Val305–Leu325. Asn315 is a D-glucose binding site. The Cytoplasmic segment spans residues Val326–Arg331. Residues Arg332–Ser352 traverse the membrane as a helical segment. Residues Leu353 to Ser363 lie on the Extracellular side of the membrane. A glycan (N-linked (GlcNAc...) asparagine) is linked at Asn358. The helical transmembrane segment at Phe364–Val389 threads the bilayer. Glu378 and Trp386 together coordinate D-glucose. Over Ala390–Pro399 the chain is Cytoplasmic. Residues Ala400–Phe420 traverse the membrane as a helical segment. Topologically, residues Pro421 to Ala429 are extracellular. Residues Tyr430–Val450 form a helical membrane-spanning segment. At Pro451–Ala494 the chain is on the cytoplasmic side. A disordered region spans residues Thr469 to Ala494. Polar residues predominate over residues Asn484 to Ala494. Position 485 is a phosphoserine (Ser485). Phosphothreonine is present on Thr492.

The protein belongs to the major facilitator superfamily. Sugar transporter (TC 2.A.1.1) family. Glucose transporter subfamily. Interacts with SMIM43; the interaction may promote SLC2A1-mediated glucose transport to meet the energy needs of mesendoderm differentiation.

It is found in the cell membrane. The protein localises to the perikaryon. Its subcellular location is the cell projection. The catalysed reaction is D-glucose(out) = D-glucose(in). It catalyses the reaction D-galactose(in) = D-galactose(out). Deoxyglucose transport is inhibited by D-glucose, D-galactose and maltose. Galactose transport is inhibited by D-glucose and maltose. Functionally, facilitative glucose transporter. Can also mediate the uptake of various other monosaccharides across the cell membrane. Mediates the uptake of glucose, 2-deoxyglucose, galactose, mannose, xylose and fucose, and probably also dehydroascorbate. Does not mediate fructose transport. Required for mesendoderm differentiation. This chain is Solute carrier family 2, facilitated glucose transporter member 3, found in Bos taurus (Bovine).